A 314-amino-acid polypeptide reads, in one-letter code: Beta-lactamase (314 aa).

The tat-type signal signal peptide spans 1 to 39 (MHPSTSRPSRRTLLTATAGAALAAATLVPGTAHASSGGR). Residues 31-50 (TAHASSGGRGHGSGSVSDAE) form a disordered region. The active-site Acyl-ester intermediate is S89. Residue 259-261 (KTG) coordinates substrate.

Belongs to the class-A beta-lactamase family. Post-translationally, predicted to be exported by the Tat system. The position of the signal peptide cleavage has been experimentally proven.

The catalysed reaction is a beta-lactam + H2O = a substituted beta-amino acid. The sequence is that of Beta-lactamase from Streptomyces albus G.